The following is a 641-amino-acid chain: tRNA 5-methylaminomethyl-2-thiouridine biosynthesis bifunctional protein MnmC (641 aa).

The interval methionine 1–threonine 219 is tRNA (mnm(5)s(2)U34)-methyltransferase. Residues isoleucine 232–valine 641 are FAD-dependent cmnm(5)s(2)U34 oxidoreductase.

The protein in the N-terminal section; belongs to the methyltransferase superfamily. tRNA (mnm(5)s(2)U34)-methyltransferase family. In the C-terminal section; belongs to the DAO family. Requires FAD as cofactor.

The protein localises to the cytoplasm. The catalysed reaction is 5-aminomethyl-2-thiouridine(34) in tRNA + S-adenosyl-L-methionine = 5-methylaminomethyl-2-thiouridine(34) in tRNA + S-adenosyl-L-homocysteine + H(+). Catalyzes the last two steps in the biosynthesis of 5-methylaminomethyl-2-thiouridine (mnm(5)s(2)U) at the wobble position (U34) in tRNA. Catalyzes the FAD-dependent demodification of cmnm(5)s(2)U34 to nm(5)s(2)U34, followed by the transfer of a methyl group from S-adenosyl-L-methionine to nm(5)s(2)U34, to form mnm(5)s(2)U34. The protein is tRNA 5-methylaminomethyl-2-thiouridine biosynthesis bifunctional protein MnmC of Shewanella pealeana (strain ATCC 700345 / ANG-SQ1).